Reading from the N-terminus, the 443-residue chain is Serine/threonine-protein kinase SSN3 (443 aa).

Residues 1 to 24 (MERKRGREMNPPSADPPSATPVAR) form a disordered region. Residues 54-384 (YKIVGFISSG…AEKALEHRYF (331 aa)) form the Protein kinase domain. ATP contacts are provided by residues 60 to 68 (ISSGTYGRV) and K84. The active-site Proton acceptor is the D185. A disordered region spans residues 405 to 443 (RRVSQEDNDIRTSSLPGTKRSGLPDDSLMGRPAKRLKEG).

It belongs to the protein kinase superfamily. CMGC Ser/Thr protein kinase family. CDC2/CDKX subfamily. As to quaternary structure, component of the srb8-11 complex, a regulatory module of the Mediator complex. Mg(2+) is required as a cofactor.

The protein resides in the nucleus. It catalyses the reaction L-seryl-[protein] + ATP = O-phospho-L-seryl-[protein] + ADP + H(+). The catalysed reaction is L-threonyl-[protein] + ATP = O-phospho-L-threonyl-[protein] + ADP + H(+). It carries out the reaction [DNA-directed RNA polymerase] + ATP = phospho-[DNA-directed RNA polymerase] + ADP + H(+). Component of the srb8-11 complex. The srb8-11 complex is a regulatory module of the Mediator complex which is itself dependent transcription. The srb8-11 complex may be involved in the transcriptional repression of a subset of genes regulated by Mediator. It may inhibit the association of the Mediator complex with RNA polymerase II to form the holoenzyme complex. The srb8-11 complex phosphorylates the C-terminal domain (CTD) of the largest subunit of RNA polymerase II. The polypeptide is Serine/threonine-protein kinase SSN3 (SSN3) (Phaeosphaeria nodorum (strain SN15 / ATCC MYA-4574 / FGSC 10173) (Glume blotch fungus)).